The sequence spans 291 residues: 33 kDa chaperonin (291 aa).

2 cysteine pairs are disulfide-bonded: Cys-235-Cys-237 and Cys-268-Cys-271.

It belongs to the HSP33 family. Under oxidizing conditions two disulfide bonds are formed involving the reactive cysteines. Under reducing conditions zinc is bound to the reactive cysteines and the protein is inactive.

It is found in the cytoplasm. Its function is as follows. Redox regulated molecular chaperone. Protects both thermally unfolding and oxidatively damaged proteins from irreversible aggregation. Plays an important role in the bacterial defense system toward oxidative stress. This chain is 33 kDa chaperonin, found in Bacillus pumilus (strain SAFR-032).